A 271-amino-acid chain; its full sequence is Acyl-[acyl-carrier-protein]--UDP-N-acetylglucosamine O-acyltransferase (271 aa).

Belongs to the transferase hexapeptide repeat family. LpxA subfamily. As to quaternary structure, homotrimer.

Its subcellular location is the cytoplasm. The catalysed reaction is a (3R)-hydroxyacyl-[ACP] + UDP-N-acetyl-alpha-D-glucosamine = a UDP-3-O-[(3R)-3-hydroxyacyl]-N-acetyl-alpha-D-glucosamine + holo-[ACP]. Its pathway is glycolipid biosynthesis; lipid IV(A) biosynthesis; lipid IV(A) from (3R)-3-hydroxytetradecanoyl-[acyl-carrier-protein] and UDP-N-acetyl-alpha-D-glucosamine: step 1/6. Functionally, involved in the biosynthesis of lipid A, a phosphorylated glycolipid that anchors the lipopolysaccharide to the outer membrane of the cell. This is Acyl-[acyl-carrier-protein]--UDP-N-acetylglucosamine O-acyltransferase from Ralstonia nicotianae (strain ATCC BAA-1114 / GMI1000) (Ralstonia solanacearum).